The chain runs to 190 residues: dCTP deaminase (190 aa).

DCTP is bound by residues 113-118, 137-139, Q158, Y172, and Q182; these read KSTYAR and TLE. E139 serves as the catalytic Proton donor/acceptor.

Belongs to the dCTP deaminase family. In terms of assembly, homotrimer.

It carries out the reaction dCTP + H2O + H(+) = dUTP + NH4(+). It participates in pyrimidine metabolism; dUMP biosynthesis; dUMP from dCTP (dUTP route): step 1/2. Its function is as follows. Catalyzes the deamination of dCTP to dUTP. The sequence is that of dCTP deaminase from Chromobacterium violaceum (strain ATCC 12472 / DSM 30191 / JCM 1249 / CCUG 213 / NBRC 12614 / NCIMB 9131 / NCTC 9757 / MK).